The primary structure comprises 93 residues: YcgL domain-containing protein VV1_0131 (93 aa).

One can recognise a YcgL domain in the interval 1-84 (MLCSIYKSSK…PPENLLQQHK (84 aa)). Residues 72-93 (LPPPPENLLQQHKERKAQQKND) form a disordered region.

In Vibrio vulnificus (strain CMCP6), this protein is YcgL domain-containing protein VV1_0131.